A 309-amino-acid chain; its full sequence is Ribosomal RNA small subunit methyltransferase H (309 aa).

S-adenosyl-L-methionine is bound by residues 33-35 (GGH), aspartate 53, phenylalanine 79, aspartate 100, and glutamine 107.

This sequence belongs to the methyltransferase superfamily. RsmH family.

The protein localises to the cytoplasm. It carries out the reaction cytidine(1402) in 16S rRNA + S-adenosyl-L-methionine = N(4)-methylcytidine(1402) in 16S rRNA + S-adenosyl-L-homocysteine + H(+). Functionally, specifically methylates the N4 position of cytidine in position 1402 (C1402) of 16S rRNA. The protein is Ribosomal RNA small subunit methyltransferase H of Clostridium botulinum (strain Langeland / NCTC 10281 / Type F).